A 435-amino-acid polypeptide reads, in one-letter code: MTTFSPREIVSELDRYIIGQHDAKRAVAIALRNRWRRQQLDPSLRDEVMPKNILMIGPTGVGKTEISRRLAKLAGAPFIKVEATKFTEVGYVGRDVEQIIRDLVEVGIGLVREKKRAEVQAKAHVSAEERVLDALVGTTASPATRENFRKKLRDGELDDKEIDIEVADAGSGMGGFEIPGMPGANIGVLNLSEMFGKAMGGRTKKVRTTVKASYSDLIRDESDKLIDNEVIQREAVRSTENDGIVFLDEIDKIAARDGGMGAGVSREGVQRDLLPLVEGTTVSTKYGPVKTDHILFIASGAFHVSKPSDLLPELQGRLPIRVELRPLNKDDFRRILTETEASLIRQYRALMETESLSLEFTDDAIDALADVAVHLNSSVENIGARRLQTVMERVLDDISYNAPDRGGTAVTIDAAYVREHVGDLAQNTDLSRFIL.

Residues Ile-18, 60–65, Asp-248, Glu-313, and Arg-385 each bind ATP; that span reads GVGKTE.

It belongs to the ClpX chaperone family. HslU subfamily. A double ring-shaped homohexamer of HslV is capped on each side by a ring-shaped HslU homohexamer. The assembly of the HslU/HslV complex is dependent on binding of ATP.

It localises to the cytoplasm. ATPase subunit of a proteasome-like degradation complex; this subunit has chaperone activity. The binding of ATP and its subsequent hydrolysis by HslU are essential for unfolding of protein substrates subsequently hydrolyzed by HslV. HslU recognizes the N-terminal part of its protein substrates and unfolds these before they are guided to HslV for hydrolysis. In Rhizobium johnstonii (strain DSM 114642 / LMG 32736 / 3841) (Rhizobium leguminosarum bv. viciae), this protein is ATP-dependent protease ATPase subunit HslU.